A 322-amino-acid chain; its full sequence is 2-methylene-furan-3-one reductase (322 aa).

NADP(+)-binding positions include lysine 59, 174 to 175 (GV), 197 to 200 (STKK), tyrosine 215, isoleucine 253, 264 to 266 (FVL), 311 to 312 (RA), and 311 to 322 (RATGKVVVYPIP). Lysine 59 serves as a coordination point for substrate.

The protein belongs to the zinc-containing alcohol dehydrogenase family. Quinone oxidoreductase subfamily. In terms of assembly, monomer. The N-terminus is blocked.

It catalyses the reaction 4-hydroxy-2,5-dimethyl-furan-3(2H)-one + NADP(+) = 4-hydroxy-5-methyl-2-methylenefuran-3(2H)-one + NADPH + H(+). Enone oxidoreductase involved in the biosynthesis of 4-hydroxy-2,5-dimethyl-3(2H)-furanone (HDMF or furaneol), the key flavor compound in strawberries. Can use both NADH and NADPH as the electron donor. The protein is 2-methylene-furan-3-one reductase (EO) of Fragaria ananassa (Strawberry).